The following is a 173-amino-acid chain: Myosin light chain 5 (173 aa).

The disordered stretch occupies residues 1-22 (MASRKTKKKEGGGLRAQRASSN). 3 EF-hand domains span residues 30–65 (TQIQ…LGKT), 100–135 (DAEE…QADK), and 136–171 (MTAE…GEEK). Ca(2+) is bound by residues aspartate 43, asparagine 45, aspartate 47, and aspartate 54.

As to quaternary structure, myosin is a hexamer of 2 heavy chains and 4 light chains. In terms of tissue distribution, jaw-closing muscles.

This chain is Myosin light chain 5 (MYL5), found in Felis catus (Cat).